We begin with the raw amino-acid sequence, 213 residues long: Thymidylate kinase (213 aa).

Residue 10-17 (GLEGAGKT) coordinates ATP.

It belongs to the thymidylate kinase family.

It catalyses the reaction dTMP + ATP = dTDP + ADP. In terms of biological role, phosphorylation of dTMP to form dTDP in both de novo and salvage pathways of dTTP synthesis. This is Thymidylate kinase from Salmonella choleraesuis (strain SC-B67).